The chain runs to 149 residues: Inner membrane protein YfeZ (149 aa).

Over 1–18 the chain is Cytoplasmic; that stretch reads MKSTEFHPVHYDAHGRLR. A helical transmembrane segment spans residues 19–39; it reads LPLLFWLVLLLQARTWVLFVI. Topologically, residues 40-58 are periplasmic; sequence AGASREQGTALLNLFYPDH. The chain crosses the membrane as a helical span at residues 59–79; the sequence is DNFWLGLIPGIPAVLAFLLSG. Over 80 to 89 the chain is Cytoplasmic; it reads RRATFPRTWR. The chain crosses the membrane as a helical span at residues 90–110; it reads VLYFLLLLAQVVLLCWQPWLW. Topologically, residues 111–115 are periplasmic; sequence LNGES. A helical transmembrane segment spans residues 116-136; it reads VSGIGLALVVADIVALIWLLT. Residues 137 to 149 lie on the Cytoplasmic side of the membrane; sequence NRRLRACFYEVKE.

It localises to the cell inner membrane. This is Inner membrane protein YfeZ (yfeZ) from Escherichia coli (strain K12).